The following is a 531-amino-acid chain: Beta-hexosaminidase subunit beta (531 aa).

Residues 1 to 24 (MRHRGLGLAALLALLAAVAPRSSA) form the signal peptide. An N-linked (GlcNAc...) asparagine glycan is attached at asparagine 50. Cysteine 65 and cysteine 111 are oxidised to a cystine. N-linked (GlcNAc...) asparagine glycans are attached at residues asparagine 116, asparagine 164, and asparagine 301. Disulfide bonds link cysteine 283–cysteine 334 and cysteine 508–cysteine 525. Glutamate 329 functions as the Proton donor in the catalytic mechanism.

The protein belongs to the glycosyl hydrolase 20 family. In terms of assembly, there are 3 forms of beta-hexosaminidase: hexosaminidase A is a heterodimer composed of one subunit alpha and one subunit beta (chain A and B); hexosaminidase B is a homodimer of two beta subunits (two chains A and B); hexosaminidase S is a homodimer of two alpha subunits. The composition of the dimer (isozyme A versus isozyme S) has a significant effect on the substrate specificity of the alpha subunit active site.

It is found in the lysosome. The protein localises to the cytoplasmic vesicle. The protein resides in the secretory vesicle. Its subcellular location is the cortical granule. The catalysed reaction is Hydrolysis of terminal non-reducing N-acetyl-D-hexosamine residues in N-acetyl-beta-D-hexosaminides.. It catalyses the reaction N-acetyl-beta-D-galactosaminyl-(1-&gt;4)-beta-D-3-sulfogalactosyl-(1-&gt;4)-beta-D-glucosyl-(1&lt;-&gt;1')-ceramide + H2O = a beta-D-3-sulfogalactosyl-(1-&gt;4)-beta-D-glucosyl-(1&lt;-&gt;1')-ceramide + N-acetyl-beta-D-galactosamine. It carries out the reaction a ganglioside GM2 (d18:1(4E)) + H2O = a ganglioside GM3 (d18:1(4E)) + N-acetyl-beta-D-galactosamine. The enzyme catalyses a ganglioside GM2 + H2O = a ganglioside GM3 + N-acetyl-beta-D-galactosamine. The catalysed reaction is beta-D-GalNAc-(1-&gt;4)-alpha-L-IdoA-(1-&gt;3)-beta-D-GalNAc-4-sulfate-(1-&gt;4)-alpha-L-IdoA-(1-&gt;3)-D-GalNAc-4-sulfate + H2O = alpha-L-IdoA-(1-&gt;3)-beta-D-GalNAc-4-sulfate-(1-&gt;4)-alpha-L-IdoA-(1-&gt;3)-D-GalNAc-4-sulfate + N-acetyl-D-galactosamine. It catalyses the reaction N-acetyl-beta-D-6-sulfogalactosaminyl-(1-&gt;4)-alpha-L-iduronyl-(1-&gt;3)-N-acetyl-D-6-sulfogalactosamine + H2O = alpha-L-iduronyl-(1-&gt;3)-N-acetyl-D-6-sulfogalactosamine + N-acetyl-D-6-sulfogalactosamine. With respect to regulation, addition of GM2A stimulates the hydrolysis of sulfated glycosphingolipid SM2 and the ganglioside GM2. Functionally, hydrolyzes the non-reducing end N-acetyl-D-hexosamine and/or sulfated N-acetyl-D-hexosamine of glycoconjugates, such as the oligosaccharide moieties from proteins and neutral glycolipids, or from certain mucopolysaccharides. The isozyme B does not hydrolyze each of these substrates, however hydrolyzes efficiently neutral oligosaccharide. Only the isozyme A is responsible for the degradation of GM2 gangliosides in the presence of GM2A. During fertilization is responsible, at least in part, for the zona block to polyspermy. Present in the cortical granules of non-activated oocytes, is exocytosed during the cortical reaction in response to oocyte activation and inactivates the sperm galactosyltransferase-binding site, accounting for the block in sperm binding to the zona pellucida. This Felis catus (Cat) protein is Beta-hexosaminidase subunit beta.